The chain runs to 386 residues: Prostacyclin receptor (386 aa).

Topologically, residues 1 to 16 are extracellular; that stretch reads MADSCRNLTYVRGSVG. Disulfide bonds link cysteine 5-cysteine 165 and cysteine 92-cysteine 170. Asparagine 7 is a glycosylation site (N-linked (GlcNAc...) asparagine). A helical transmembrane segment spans residues 17 to 38; sequence PATSTLMFVAGVVGNGLALGIL. The Cytoplasmic segment spans residues 39–51; the sequence is SARRPARPSAFAV. Residues 52-76 form a helical membrane-spanning segment; sequence LVTGLAATDLLGTSFLSPAVFVAYA. Over 77–94 the chain is Extracellular; that stretch reads RNSSLLGLARGGPALCDA. Residues 95 to 115 traverse the membrane as a helical segment; the sequence is FAFAMTFFGLASMLILFAMAV. Over 116 to 134 the chain is Cytoplasmic; it reads ERCLALSHPYLYAQLDGPR. The helical transmembrane segment at 135-158 threads the bilayer; it reads CARLALPAIYAFCVLFCALPLLGL. Residues 159 to 181 are Extracellular-facing; it reads GQHQQYCPGSWCFLRMRWAQPGG. A helical membrane pass occupies residues 182–208; that stretch reads AAFSLAYAGLVALLVAAIFLCNGSVTL. At 209–235 the chain is on the cytoplasmic side; that stretch reads SLCRMYRQQKRHQGSLGPRPRTGEDEV. Residues 236-260 traverse the membrane as a helical segment; sequence DHLILLALMTVVMAVCSLPLTIRCF. At 261–274 the chain is on the extracellular side; the sequence is TQAVAPDSSSEMGD. Residues 275-295 form a helical membrane-spanning segment; that stretch reads LLAFRFYAFNPILDPWVFILF. The Cytoplasmic portion of the chain corresponds to 296–386; that stretch reads RKAVFQRLKL…AEASVACSLC (91 aa). Positions 322–376 are disordered; sequence PLSQLASGRRDPRAPSAPVGKEGSCVPLSAWGEGQVEPLPPTQQSSGSAVGTSSK. Positions 363–376 are enriched in polar residues; it reads TQQSSGSAVGTSSK. Cysteine 383 is subject to Cysteine methyl ester. A lipid anchor (S-farnesyl cysteine) is attached at cysteine 383. Residues 384–386 constitute a propeptide, removed in mature form; the sequence is SLC.

This sequence belongs to the G-protein coupled receptor 1 family. As to quaternary structure, interacts (non-isoprenylated C-terminus) with PDZK1. Isoprenylation does not influence ligand binding but is required for efficient coupling to the effectors adenylyl cyclase and phospholipase C.

It is found in the cell membrane. Receptor for prostacyclin (prostaglandin I2 or PGI2). The activity of this receptor is mediated by G(s) proteins which activate adenylate cyclase. This chain is Prostacyclin receptor (PTGIR), found in Homo sapiens (Human).